The following is a 275-amino-acid chain: Autophagy protein 5 (275 aa).

Met1 is subject to N-acetylmethionine. A Glycyl lysine isopeptide (Lys-Gly) (interchain with G-Cter in ATG12) cross-link involves residue Lys130.

Belongs to the ATG5 family. Forms a conjugate with ATG12. Part of the minor complex composed of 4 sets of ATG12-ATG5 and ATG16L1 (400 kDa); this complex interacts with ATG3 leading to disruption of ATG7 interaction and promotion of ATG8-like proteins lipidation. Forms an 800-kDa complex composed of ATG12-ATG5 and ATG16L2. The ATG12-ATG5 conjugate interacts with RAB33A; this interaction is bridged by ATG16L1 and promotes ATG12-ATG5-ATG16L1 complex recruitment to phagophores. Interacts with TECPR1; the interaction is direct and does not take place when ATG16L1 is associated with the ATG5-ATG12 conjugate. Interacts with DHX58/RIG-1, IFIH1/MDA5 and MAVS/IPS-1 in monomeric form as well as in ATG12-ATG5 conjugate form. The interaction with MAVS is further enhanced upon vesicular stomatitis virus (VSV) infection. Interacts with ATG3. Interacts with ATG7 and ATG10. Interacts with FADD. Interacts with Bassoon/BSN; this interaction is important for the regulation of presynaptic autophagy. Interacts with ATG16L2. In terms of processing, conjugated to ATG12; which is essential for autophagy, but is not required for association with isolation membrane. Post-translationally, acetylated by EP300.

The protein localises to the cytoplasm. Its subcellular location is the preautophagosomal structure membrane. In terms of biological role, involved in autophagic vesicle formation. Conjugation with ATG12, through a ubiquitin-like conjugating system involving ATG7 as an E1-like activating enzyme and ATG10 as an E2-like conjugating enzyme, is essential for its function. The ATG12-ATG5 conjugate acts as an E3-like enzyme which is required for lipidation of ATG8 family proteins and their association to the vesicle membranes. Involved in mitochondrial quality control after oxidative damage, and in subsequent cellular longevity. Plays a critical role in multiple aspects of lymphocyte development and is essential for both B and T lymphocyte survival and proliferation. Required for optimal processing and presentation of antigens for MHC II. Involved in the maintenance of axon morphology and membrane structures, as well as in normal adipocyte differentiation. Promotes primary ciliogenesis through removal of OFD1 from centriolar satellites and degradation of IFT20 via the autophagic pathway. As part of the ATG8 conjugation system with ATG12 and ATG16L1, required for recruitment of LRRK2 to stressed lysosomes and induction of LRRK2 kinase activity in response to lysosomal stress. Functionally, may play an important role in the apoptotic process, possibly within the modified cytoskeleton. Its expression is a relatively late event in the apoptotic process, occurring downstream of caspase activity. Plays a crucial role in IFN-gamma-induced autophagic cell death by interacting with FADD. The sequence is that of Autophagy protein 5 from Bos taurus (Bovine).